A 57-amino-acid chain; its full sequence is FLVLLLVSLMCYAEIAEGSQPTECKYGRPCNSDRDCCWEYRCLSSGREYTCKQDPGP.

Residues 1-13 (FLVLLLVSLMCYA) form the signal peptide. Positions 14–18 (EIAEG) are excised as a propeptide. Cystine bridges form between Cys24/Cys37, Cys30/Cys42, and Cys36/Cys51.

It belongs to the scorpion calcin-like family. KTX subfamily. Expressed by the venom gland.

It localises to the secreted. This recombinant peptide inhibits voltage-gated potassium channels mKv1.3/KCNA3 (IC(50)=1.70 uM), mKv1.1/KCNA1 (10 uM inhibits 40% of currents) and hKv1.2/KCNA2 (10 uM inhibits 42% of currents). May also increase intracellular calcium release through the activation of nuclear inositol 1,4,5-trisphosphate receptors (ITPR) of cardiomyocytes, thereby causing an increase in the contraction frequency of these cells. The protein is Potassium channel toxin KTx1 of Isometrus maculatus (Lesser brown scorpion).